Consider the following 317-residue polypeptide: Transaldolase (317 aa).

The active-site Schiff-base intermediate with substrate is Lys132.

This sequence belongs to the transaldolase family. Type 1 subfamily. As to quaternary structure, homodimer.

The protein resides in the cytoplasm. The enzyme catalyses D-sedoheptulose 7-phosphate + D-glyceraldehyde 3-phosphate = D-erythrose 4-phosphate + beta-D-fructose 6-phosphate. Its pathway is carbohydrate degradation; pentose phosphate pathway; D-glyceraldehyde 3-phosphate and beta-D-fructose 6-phosphate from D-ribose 5-phosphate and D-xylulose 5-phosphate (non-oxidative stage): step 2/3. Functionally, transaldolase is important for the balance of metabolites in the pentose-phosphate pathway. This chain is Transaldolase, found in Yersinia pseudotuberculosis serotype O:1b (strain IP 31758).